Here is a 103-residue protein sequence, read N- to C-terminus: Large ribosomal subunit protein bL21 (103 aa).

The protein belongs to the bacterial ribosomal protein bL21 family. In terms of assembly, part of the 50S ribosomal subunit. Contacts protein L20.

Functionally, this protein binds to 23S rRNA in the presence of protein L20. The polypeptide is Large ribosomal subunit protein bL21 (Treponema denticola (strain ATCC 35405 / DSM 14222 / CIP 103919 / JCM 8153 / KCTC 15104)).